A 512-amino-acid chain; its full sequence is GMP synthase [glutamine-hydrolyzing] (512 aa).

Residues 7-197 (TIIVLDFGSQ…VFGVCGCSEG (191 aa)) enclose the Glutamine amidotransferase type-1 domain. C84 serves as the catalytic Nucleophile. Catalysis depends on residues H171 and E173. In terms of domain architecture, GMPS ATP-PPase spans 198-387 (WNMENFIEVE…LGIPDEIVWR (190 aa)). ATP is bound at residue 225 to 231 (SGGVDSS).

In terms of assembly, homodimer.

It catalyses the reaction XMP + L-glutamine + ATP + H2O = GMP + L-glutamate + AMP + diphosphate + 2 H(+). The protein operates within purine metabolism; GMP biosynthesis; GMP from XMP (L-Gln route): step 1/1. Functionally, catalyzes the synthesis of GMP from XMP. This chain is GMP synthase [glutamine-hydrolyzing], found in Bacillus cereus (strain B4264).